The chain runs to 261 residues: Sulfur carrier protein FdhD (261 aa).

The Cysteine persulfide intermediate role is filled by C105. A Mo-bis(molybdopterin guanine dinucleotide)-binding site is contributed by 245–250; sequence FIRGDR.

This sequence belongs to the FdhD family.

It is found in the cytoplasm. In terms of biological role, required for formate dehydrogenase (FDH) activity. Acts as a sulfur carrier protein that transfers sulfur from IscS to the molybdenum cofactor prior to its insertion into FDH. In Listeria innocua serovar 6a (strain ATCC BAA-680 / CLIP 11262), this protein is Sulfur carrier protein FdhD.